The chain runs to 387 residues: 1-deoxy-D-xylulose 5-phosphate reductoisomerase (387 aa).

Positions 10, 11, 12, 13, 36, 37, and 124 each coordinate NADPH. 1-deoxy-D-xylulose 5-phosphate is bound at residue lysine 125. Glutamate 126 serves as a coordination point for NADPH. Position 150 (aspartate 150) interacts with Mn(2+). 1-deoxy-D-xylulose 5-phosphate contacts are provided by serine 151, glutamate 152, serine 176, and histidine 199. Glutamate 152 lines the Mn(2+) pocket. Glycine 205 contacts NADPH. 4 residues coordinate 1-deoxy-D-xylulose 5-phosphate: serine 212, asparagine 217, lysine 218, and glutamate 221. Glutamate 221 contributes to the Mn(2+) binding site.

It belongs to the DXR family. Mg(2+) is required as a cofactor. The cofactor is Mn(2+).

The catalysed reaction is 2-C-methyl-D-erythritol 4-phosphate + NADP(+) = 1-deoxy-D-xylulose 5-phosphate + NADPH + H(+). It functions in the pathway isoprenoid biosynthesis; isopentenyl diphosphate biosynthesis via DXP pathway; isopentenyl diphosphate from 1-deoxy-D-xylulose 5-phosphate: step 1/6. Catalyzes the NADPH-dependent rearrangement and reduction of 1-deoxy-D-xylulose-5-phosphate (DXP) to 2-C-methyl-D-erythritol 4-phosphate (MEP). The sequence is that of 1-deoxy-D-xylulose 5-phosphate reductoisomerase from Cyanothece sp. (strain PCC 7425 / ATCC 29141).